The sequence spans 260 residues: Dynein regulatory complex subunit 6 (260 aa).

The segment covering 1–13 (MAPKKKGGGKKKK) has biased composition (basic residues). The segment at 1-43 (MAPKKKGGGKKKKKDDGAEPPHDGSWERAVESGTWEKPVTDLP) is disordered. Basic and acidic residues predominate over residues 14–30 (KDDGAEPPHDGSWERAV).

This sequence belongs to the DRC6 family. As to quaternary structure, component of the nexin-dynein regulatory complex (N-DRC).

It is found in the cytoplasm. The protein localises to the cytoskeleton. Its subcellular location is the flagellum axoneme. Its function is as follows. Component of the nexin-dynein regulatory complex (N-DRC), a key regulator of ciliary/flagellar motility which maintains the alignment and integrity of the distal axoneme and regulates microtubule sliding in motile axonemes. The chain is Dynein regulatory complex subunit 6 from Chlamydomonas reinhardtii (Chlamydomonas smithii).